The sequence spans 979 residues: Pro-apoptotic serine protease NMA111 (979 aa).

Over residues 1–20 the composition is skewed to basic and acidic residues; sequence MKRNGESHLNGEAKKSRTEQ. The disordered stretch occupies residues 1–43; it reads MKRNGESHLNGEAKKSRTEQNQEQQDYQDEYYSSSDEELLPSS. The span at 21–34 shows a compositional bias: low complexity; it reads NQEQQDYQDEYYSS. The serine protease stretch occupies residues 65-260; it reads KVVNSVVSIQ…LPVSRPKRAL (196 aa). Residues H108, D139, and S222 each act as charge relay system in the active site. PDZ domains follow at residues 277–362 and 871–943; these read EWQL…FVFQ and PHYG…VSFD.

It belongs to the peptidase S1C family.

Its subcellular location is the nucleus. Its function is as follows. Nuclear serine protease which mediates apoptosis. The protein is Pro-apoptotic serine protease NMA111 (NMA111) of Lodderomyces elongisporus (strain ATCC 11503 / CBS 2605 / JCM 1781 / NBRC 1676 / NRRL YB-4239) (Yeast).